The sequence spans 1111 residues: Nuclear migration and anchoring protein unc-84 (1111 aa).

Residues 1-509 are Nuclear-facing; it reads MAPATEADNN…LTDKKSSKFS (509 aa). 2 required for nuclear envelope localization regions span residues 118 to 244 and 503 to 507; these read YILR…SQTL and KKSSK. A disordered region spans residues 232 to 253; it reads ERASRMTTRSQTLERSRKFDGL. Residues 243–252 are compositionally biased toward basic and acidic residues; that stretch reads TLERSRKFDG. A helical transmembrane segment spans residues 510-530; sequence WCQILGLLLALLFAIFLLGFL. At 531 to 1111 the chain is on the perinuclear space side; that stretch reads TSDNTAIRVK…LRVHGKVVQV (581 aa). Positions 912–1111 are interaction with zyg-12; that stretch reads QYDKNHLEAI…LRVHGKVVQV (200 aa). One can recognise an SUN domain in the interval 945 to 1109; the sequence is GGAVVSTRCS…YRLRVHGKVV (165 aa).

As to quaternary structure, component of the unc-83-unc-84 LINC complex which contains at least unc-83 and unc-84. Within the unc-83-unc-84 LINC complex interacts (via C-terminus) with unc-83; the interaction is probably required to recruit unc-83 to the nuclear membrane. Most likely interacts with anc-1; the interaction is probably required to recruit anc-1 to the nuclear envelope. Interacts (via C-terminus) with zyg-12 (via C-terminus); the interaction is direct. May interact with lmn-1; this interaction may be required to complete the connection between the nuclear lamina and the cytoskeleton. Expressed in all somatic cells. Not expressed in germ cells in the mitotic and transition zones of the gonad. One study shows expression at the beginning of the late pachytene stage in the proximal gonad, but there is no expression in the male germline, suggesting expression is specific to oogenesis in hermaphrodites.

Its subcellular location is the nucleus inner membrane. The protein resides in the cytoplasm. It is found in the cytoskeleton. Involved in nuclear migration and anchoring in hypodermal precursor cells. Most likely recruits anc-1 to the nuclear envelope where anc-1 functions to tether the nucleus to the actin cytoskeleton. Component of the unc-83-unc-84 LINC (LInker of Nucleoskeleton and Cytoskeleton) complex where it recruits and interacts with unc-83 to form a bridge connecting the nuclear envelope to the cytoskeleton which allows for nuclear transport along microtubules. Its role in nuclear migration may be in association with lamin, lmn-1. Regulates nuclear migrations in one-cell embryos, controlling the posterior migration of the male pronucleus following fertilization. Not required for centrosome attachment to the nucleus. Plays a role in the maintenance of the nuclear envelope architecture in body wall muscle cells. May be involved in DNA damage repair through an association with zyg-12. Potentially has roles in homologous recombination, double strand break repair and meiotic recombination. Specifically, may in part inhibit non-homologous end joining repair, most likely through recruiting fan-1 to the nucleoplasm, to facilitate the repair of DNA cross-links. This is Nuclear migration and anchoring protein unc-84 from Caenorhabditis elegans.